A 293-amino-acid polypeptide reads, in one-letter code: Diaminopimelate epimerase (293 aa).

Residues N13, Q46, and N66 each contribute to the substrate site. Residue C75 is the Proton donor of the active site. Residues 76–77, N162, N195, and 213–214 contribute to the substrate site; these read GN and ER. C222 acts as the Proton acceptor in catalysis. 223–224 is a substrate binding site; sequence GT.

This sequence belongs to the diaminopimelate epimerase family. As to quaternary structure, homodimer.

It localises to the cytoplasm. The catalysed reaction is (2S,6S)-2,6-diaminopimelate = meso-2,6-diaminopimelate. It functions in the pathway amino-acid biosynthesis; L-lysine biosynthesis via DAP pathway; DL-2,6-diaminopimelate from LL-2,6-diaminopimelate: step 1/1. Catalyzes the stereoinversion of LL-2,6-diaminopimelate (L,L-DAP) to meso-diaminopimelate (meso-DAP), a precursor of L-lysine and an essential component of the bacterial peptidoglycan. This is Diaminopimelate epimerase from Psychrobacter sp. (strain PRwf-1).